A 479-amino-acid polypeptide reads, in one-letter code: Ribulose bisphosphate carboxylase large chain (479 aa).

Residues 1–2 (MS) constitute a propeptide that is removed on maturation. 2 residues coordinate substrate: N123 and T173. K175 acts as the Proton acceptor in catalysis. K177 lines the substrate pocket. Mg(2+) contacts are provided by K201, D203, and E204. K201 is modified (N6-carboxylysine). S208 is modified (phosphoserine). The active-site Proton acceptor is H294. 2 residues coordinate substrate: R295 and H327. T330 carries the phosphothreonine modification. Residue S379 coordinates substrate.

The protein belongs to the RuBisCO large chain family. Type I subfamily. In terms of assembly, heterohexadecamer of 8 large chains and 8 small chains; disulfide-linked. The disulfide link is formed within the large subunit homodimers. It depends on Mg(2+) as a cofactor. Post-translationally, the disulfide bond which can form in the large chain dimeric partners within the hexadecamer appears to be associated with oxidative stress and protein turnover.

The protein resides in the plastid. It localises to the chloroplast. The enzyme catalyses 2 (2R)-3-phosphoglycerate + 2 H(+) = D-ribulose 1,5-bisphosphate + CO2 + H2O. It carries out the reaction D-ribulose 1,5-bisphosphate + O2 = 2-phosphoglycolate + (2R)-3-phosphoglycerate + 2 H(+). RuBisCO catalyzes two reactions: the carboxylation of D-ribulose 1,5-bisphosphate, the primary event in carbon dioxide fixation, as well as the oxidative fragmentation of the pentose substrate in the photorespiration process. Both reactions occur simultaneously and in competition at the same active site. The protein is Ribulose bisphosphate carboxylase large chain of Brassica oleracea (Wild cabbage).